The primary structure comprises 272 residues: EID1-like F-box protein 3 (272 aa).

The F-box domain occupies 29 to 81 (SGKSGIENERVLVLVFESISWDIHTLCTIASLSRRFCAIARRILWRRLCVNRA).

This Arabidopsis thaliana (Mouse-ear cress) protein is EID1-like F-box protein 3 (EDL3).